A 455-amino-acid chain; its full sequence is uncharacterized protein (455 aa).

The N-terminal stretch at 1-27 (MSQRQQFQFLLSFLILIFLKFIIQIRC) is a signal peptide. Residues 29–434 (ESNGVIIIKN…GDDENLINSS (406 aa)) lie on the Extracellular side of the membrane. 4 N-linked (GlcNAc...) asparagine glycosylation sites follow: Asn136, Asn148, Asn210, and Asn298. Residues 383–402 (SSSTTSTTSSSSSSSSSTTT) are disordered. N-linked (GlcNAc...) asparagine glycosylation is found at Asn421 and Asn432. The helical transmembrane segment at 435 to 455 (SVIKFSTPIIMIIIILINIKF) threads the bilayer.

The protein localises to the membrane. This is an uncharacterized protein from Dictyostelium discoideum (Social amoeba).